A 163-amino-acid polypeptide reads, in one-letter code: Calcium-binding protein I (163 aa).

3 consecutive EF-hand domains span residues 20 to 42 (DKNK…NSKN), 82 to 117 (KPEI…LGCG), and 118 to 153 (NSKK…LKQD). Positions 95, 97, 99, 101, 106, 131, 133, 135, 137, and 142 each coordinate Ca(2+).

In Dictyostelium discoideum (Social amoeba), this protein is Calcium-binding protein I (cbpI).